Reading from the N-terminus, the 465-residue chain is Dihydrolipoyl dehydrogenase (465 aa).

Residues 34–42 (EKREAGGTC), K51, and G114 each bind FAD. C42 and C47 are oxidised to a cystine. NAD(+) is bound by residues 180 to 184 (GGGVI), E203, V237, and 264 to 267 (SIGR). FAD is bound by residues D307 and A315. The active-site Proton acceptor is the H439.

It belongs to the class-I pyridine nucleotide-disulfide oxidoreductase family. FAD serves as cofactor.

The protein resides in the cytoplasm. It catalyses the reaction N(6)-[(R)-dihydrolipoyl]-L-lysyl-[protein] + NAD(+) = N(6)-[(R)-lipoyl]-L-lysyl-[protein] + NADH + H(+). Its function is as follows. The branched-chain alpha-keto dehydrogenase complex catalyzes the overall conversion of alpha-keto acids to acyl-CoA and CO(2). It contains multiple copies of 3 enzymatic components: branched-chain alpha-keto acid decarboxylase (E1), lipoamide acyltransferase (E2) and lipoamide dehydrogenase (E3). This chain is Dihydrolipoyl dehydrogenase (lpdA), found in Chlamydia trachomatis serovar D (strain ATCC VR-885 / DSM 19411 / UW-3/Cx).